We begin with the raw amino-acid sequence, 70 residues long: ATP synthase subunit c (70 aa).

The next 2 membrane-spanning stretches (helical) occupy residues Ile-4 to Ile-24 and Phe-47 to Val-67.

It belongs to the ATPase C chain family. In terms of assembly, F-type ATPases have 2 components, F(1) - the catalytic core - and F(0) - the membrane proton channel. F(1) has five subunits: alpha(3), beta(3), gamma(1), delta(1), epsilon(1). F(0) has three main subunits: a(1), b(2) and c(10-14). The alpha and beta chains form an alternating ring which encloses part of the gamma chain. F(1) is attached to F(0) by a central stalk formed by the gamma and epsilon chains, while a peripheral stalk is formed by the delta and b chains.

Its subcellular location is the cell membrane. Its function is as follows. F(1)F(0) ATP synthase produces ATP from ADP in the presence of a proton or sodium gradient. F-type ATPases consist of two structural domains, F(1) containing the extramembraneous catalytic core and F(0) containing the membrane proton channel, linked together by a central stalk and a peripheral stalk. During catalysis, ATP synthesis in the catalytic domain of F(1) is coupled via a rotary mechanism of the central stalk subunits to proton translocation. Functionally, key component of the F(0) channel; it plays a direct role in translocation across the membrane. A homomeric c-ring of between 10-14 subunits forms the central stalk rotor element with the F(1) delta and epsilon subunits. In Staphylococcus carnosus (strain TM300), this protein is ATP synthase subunit c.